Reading from the N-terminus, the 199-residue chain is uncharacterized protein (199 aa).

This is an uncharacterized protein from Borreliella burgdorferi (strain ATCC 35210 / DSM 4680 / CIP 102532 / B31) (Borrelia burgdorferi).